The following is a 38-amino-acid chain: Antimicrobial peptide 1 (38 aa).

Post-translationally, disulfide bonds. Expressed in flowers but not in leaves, seeds or roots (at protein level).

Antimicrobial peptide. Active against fungal species B.cinerea (IC(50)=5.8 uM) and A.niger (IC(50)=5.6 uM) but not against F.oxysporum, F.graminearum, B.sorokinina and P.debaryanum at concentrations below 10 uM. Active against bacterial species P.syringae, B.subtilis and X.campestris. The polypeptide is Antimicrobial peptide 1 (Taraxacum officinale (Common dandelion)).